The chain runs to 300 residues: Acyl-CoA-binding domain-containing protein 6 (300 aa).

Positions Met-1–Asp-19 are enriched in low complexity. Positions Met-1–Lys-43 are disordered. The 86-residue stretch at Leu-60–Gln-145 folds into the ACB domain. An acyl-CoA-binding positions include Tyr-87 to Lys-91, Lys-113, and Tyr-132. Residues Glu-142–Pro-162 are disordered. The segment covering Ser-147–Thr-157 has biased composition (basic and acidic residues). ANK repeat units follow at residues Glu-209–Ser-238 and Glu-242–Ile-271. Positions Ser-270–Gly-300 are disordered. A compositionally biased stretch (polar residues) spans Glu-284–Arg-293.

In terms of tissue distribution, higly expressed in the central nervous system, developing eyes, otic vesicle, and trunk muscles.

Its subcellular location is the cytoplasm. It localises to the nucleus. Functionally, binds long-chain acyl-coenzyme A molecules with a strong preference for unsaturated C18:1-CoA. Does not bind fatty acids. Plays a role in protein N-myristoylation. The sequence is that of Acyl-CoA-binding domain-containing protein 6 (acbd6) from Danio rerio (Zebrafish).